Reading from the N-terminus, the 1028-residue chain is GPI inositol-deacylase (1028 aa).

A helical membrane pass occupies residues 51–71; the sequence is VFGLGLLLFCIVCMAYLSPFL. Asn166 carries an N-linked (GlcNAc...) asparagine glycan. Ser231 is a catalytic residue. Asn299, Asn530, Asn586, and Asn679 each carry an N-linked (GlcNAc...) asparagine glycan. Helical transmembrane passes span 699-719, 740-760, 799-819, 867-887, 915-935, 948-968, 979-999, and 1002-1022; these read LAVAALPLSLVSFVLANQFAL, FWLKLTLSSILLTPILNISFI, WIGPLLSCITLSLVYMLAFGI, IMILAVVLYVPYQLVFVLLFL, SYLLLMLCVLPINAPMVFVFL, SHHNCLAILPIILLVCDNAGL, ISKLITIGSFLYLSLYSVIYG, and NLFWAHHLVNLISGWLLFTSL.

This sequence belongs to the GPI inositol-deacylase family.

The protein localises to the endoplasmic reticulum membrane. Its function is as follows. Involved in inositol deacylation of GPI-anchored proteins which plays important roles in the quality control and ER-associated degradation of GPI-anchored proteins. The sequence is that of GPI inositol-deacylase (BST1) from Eremothecium gossypii (strain ATCC 10895 / CBS 109.51 / FGSC 9923 / NRRL Y-1056) (Yeast).